A 194-amino-acid polypeptide reads, in one-letter code: MGSDETKSTLDTERSTVPRTGTTTKSCSITQVVLRFVLFAATLTSIVVMVTSKQTKNIFIPGTPIRIPAAKFTNSPALIYFVVALSVACFYSIVSTFVTVSAFKKHSCSAILLLNLAIMDAVMVGIVASATGAGGGVAYLGLKGNKEVRWGKICNIYDKFCRHVGGAIAVSLFASVILLLLSIISVLSLYKKIR.

Residues 1 to 16 (MGSDETKSTLDTERST) show a composition bias toward basic and acidic residues. The disordered stretch occupies residues 1–23 (MGSDETKSTLDTERSTVPRTGTT). Residues 1–31 (MGSDETKSTLDTERSTVPRTGTTTKSCSITQ) lie on the Cytoplasmic side of the membrane. Residues 32–52 (VVLRFVLFAATLTSIVVMVTS) traverse the membrane as a helical segment. Residues 53-77 (KQTKNIFIPGTPIRIPAAKFTNSPA) are Extracellular-facing. The helical transmembrane segment at 78 to 98 (LIYFVVALSVACFYSIVSTFV) threads the bilayer. Over 99–109 (TVSAFKKHSCS) the chain is Cytoplasmic. The helical transmembrane segment at 110–130 (AILLLNLAIMDAVMVGIVASA) threads the bilayer. The Extracellular segment spans residues 131-163 (TGAGGGVAYLGLKGNKEVRWGKICNIYDKFCRH). Residues 164 to 184 (VGGAIAVSLFASVILLLLSII) traverse the membrane as a helical segment. Over 185–194 (SVLSLYKKIR) the chain is Cytoplasmic.

It belongs to the Casparian strip membrane proteins (CASP) family. Homodimer and heterodimers.

Its subcellular location is the cell membrane. This chain is CASP-like protein 1D1, found in Arabidopsis lyrata subsp. lyrata (Lyre-leaved rock-cress).